Consider the following 355-residue polypeptide: Syntaxin-5 (355 aa).

Topologically, residues 1–333 (MIPRKRYGSK…KYFQSVTSNR (333 aa)) are cytoplasmic. The span at 28-37 (PATAGSSSSD) shows a compositional bias: polar residues. The interval 28–47 (PATAGSSSSDIAPLPPPVAL) is disordered. An IxM motif; signal for cargo packaging into COPII-coated vesicles motif is present at residues 245–247 (IDM). The region spanning 263–325 (DSYIQSRADT…EAAHSEILKY (63 aa)) is the t-SNARE coiled-coil homology domain. Residues 287 to 318 (FQQLAHMVKEQEETIQRIDENVLGAQLDVEAA) adopt a coiled-coil conformation. Residues 334–354 (WLMVKIFLILIVFFIIFVVFL) form a helical; Anchor for type IV membrane protein membrane-spanning segment. Position 355 (A355) is a topological domain, vesicular.

This sequence belongs to the syntaxin family. As to quaternary structure, part of a ternary complex containing STX5A, NSFL1C and VCP. Part of a unique SNARE complex composed of the Golgi SNAREs GOSR1, GOSR2 and YKT6. This complex also includes VTI1A. Component of a SNARE complex consisting of STX5, YKT6, GOSR1 and BET1L. Interacts with BET1L. Interacts with BET1. Interacts with COG4. Interacts with GM130/GOLGA2. Interacts (via IxM motif) with SEC24C and SEC24D; mediates STX5 packaging into COPII-coated vesicles. Interacts with VLDLR; this interaction mediates VLDLR translocation from the endoplasmic reticulum to the plasma membrane.

It localises to the endoplasmic reticulum-Golgi intermediate compartment membrane. Its subcellular location is the golgi apparatus membrane. Mediates endoplasmic reticulum to Golgi transport. Together with p115/USO1 and GM130/GOLGA2, involved in vesicle tethering and fusion at the cis-Golgi membrane to maintain the stacked and inter-connected structure of the Golgi apparatus. The protein is Syntaxin-5 (STX5) of Bos taurus (Bovine).